Consider the following 340-residue polypeptide: Putative Ig-like domain-containing protein C1 (340 aa).

The Ig-like domain maps to 207–294; that stretch reads PTVTVTGIER…SSPRVMVPTI (88 aa).

In Sus scrofa (Pig), this protein is Putative Ig-like domain-containing protein C1.